A 266-amino-acid chain; its full sequence is Short-chain dehydrogenase/reductase atnB (266 aa).

NADP(+) contacts are provided by Ile13, Asp57, and Asn85. Active-site proton donor residues include Ser147 and Tyr166. Residues Tyr166, Lys170, Val199, and Thr201 each contribute to the NADP(+) site. Lys170 acts as the Lowers pKa of active site Tyr in catalysis.

It belongs to the short-chain dehydrogenases/reductases (SDR) family.

The protein operates within secondary metabolite biosynthesis; terpenoid biosynthesis. Short-chain dehydrogenase/reductase; part of the gene cluster that mediates the biosynthesis of the meroterpenoids arthripenoids. The pathway begins with the HR-PKS atnH that catalyzes two chain-extension steps to form a reduced triketide, which then primes the SAT domain in the NR-PKS atnG to initiate three more cycles of extension to give a linear hexaketide corresponding to the polyketide part of arthripenoids. The FAD-dependent monooxygenase atnJ then performs an oxidative decarboxylation at C11 of the atnH/atnG product, via an electrophilic aromatic hydroxylation with concomitant ipso-decarboxylation. The membrane-bound polyprenyl transferase atnF then introduces a farnesyl group before the FAD-dependent monooxygenase atnK functions as the first epoxidase on terminal C12'-C13' olefin, followed by a second epoxidation on C7'-C8' catalyzed by atnA. The terpene cyclase/mutase atnI then initiates the sequential tricyclic ring formation through protonation of the terminal epoxide and catalyzes the regioselective and stereoselective 6/6/6-tricyclic ring formation. The cytochrome P450 monooxygenase atnM is responsible for hydroxylating both C1' and C10'. The next steps may involve ketoreduction and acetyl transfer by the ketoreductase atnB and the acetyltransferase atnC, and lead to the production of arthripenoid B, the final biosynthetic product of the atn cluster. The hydroquinone moiety in arthripenoid B is prone to undergo spontaneous oxidation to afford a benzoquinone compound, a key intermediate for generating structure diversity. For instance, addition of a cysteine followed by ring contraction gives arthripenoid A, tautomerization gives the main product arthripenoid C, addition of a molecular of water or amine affords arthripenoid D or E, respectively, and loss of one water forms arthripenoid F. The polypeptide is Short-chain dehydrogenase/reductase atnB (Arthrinium sp).